We begin with the raw amino-acid sequence, 587 residues long: Bifunctional lycopene cyclase/phytoene synthase (587 aa).

Positions 1 to 236 (MGLDYILVHV…IVFGLVCIDY (236 aa)) are lycopene beta-cyclase. 7 helical membrane passes run 5-25 (YILV…LVYW), 35-55 (KIST…SYLV), 65-85 (NGVI…FFII), 91-111 (SLVY…GTVA), 116-136 (LIGA…LCFG), 145-165 (IITW…GFII), and 218-238 (LFFL…DYAI). Residues 243–587 (CELVQSPQAV…VAYRAMAWRK (345 aa)) form a phytoene synthase region.

The protein in the N-terminal section; belongs to the lycopene beta-cyclase family. In the C-terminal section; belongs to the phytoene/squalene synthase family.

The protein resides in the membrane. The catalysed reaction is all-trans-lycopene = gamma-carotene. It carries out the reaction gamma-carotene = all-trans-beta-carotene. The enzyme catalyses 2 (2E,6E,10E)-geranylgeranyl diphosphate = 15-cis-phytoene + 2 diphosphate. Its pathway is carotenoid biosynthesis; beta-carotene biosynthesis. The protein operates within carotenoid biosynthesis; phytoene biosynthesis; all-trans-phytoene from geranylgeranyl diphosphate: step 1/1. Its function is as follows. Bifunctional enzyme that catalyzes the reactions from geranylgeranyl diphosphate to phytoene (phytoene synthase) and lycopene to beta-carotene via the intermediate gamma-carotene (lycopene cyclase). The chain is Bifunctional lycopene cyclase/phytoene synthase from Aspergillus oryzae (strain ATCC 42149 / RIB 40) (Yellow koji mold).